The primary structure comprises 397 residues: 1-deoxy-D-xylulose 5-phosphate reductoisomerase (397 aa).

Thr-10, Gly-11, Ser-12, Ile-13, Gly-36, Asn-38, and Asn-124 together coordinate NADPH. Lys-125 is a binding site for 1-deoxy-D-xylulose 5-phosphate. Glu-126 lines the NADPH pocket. Asp-150 is a binding site for Mn(2+). Ser-151, Glu-152, Ser-186, and His-209 together coordinate 1-deoxy-D-xylulose 5-phosphate. Glu-152 lines the Mn(2+) pocket. Gly-215 is a binding site for NADPH. Positions 222, 227, 228, and 231 each coordinate 1-deoxy-D-xylulose 5-phosphate. Residue Glu-231 participates in Mn(2+) binding.

This sequence belongs to the DXR family. Mg(2+) is required as a cofactor. Requires Mn(2+) as cofactor.

The catalysed reaction is 2-C-methyl-D-erythritol 4-phosphate + NADP(+) = 1-deoxy-D-xylulose 5-phosphate + NADPH + H(+). It functions in the pathway isoprenoid biosynthesis; isopentenyl diphosphate biosynthesis via DXP pathway; isopentenyl diphosphate from 1-deoxy-D-xylulose 5-phosphate: step 1/6. Functionally, catalyzes the NADPH-dependent rearrangement and reduction of 1-deoxy-D-xylulose-5-phosphate (DXP) to 2-C-methyl-D-erythritol 4-phosphate (MEP). The sequence is that of 1-deoxy-D-xylulose 5-phosphate reductoisomerase from Photobacterium profundum (strain SS9).